Consider the following 317-residue polypeptide: Carbonic anhydrase 6 (317 aa).

The first 17 residues, 1-17 (MRALVSVVSLFFLGIQA), serve as a signal peptide directing secretion. The Alpha-carbonic anhydrase domain maps to 19 to 277 (SDWSYSGDDG…NNHRVVEANF (259 aa)). Cys-41 and Cys-223 are joined by a disulfide. His-84 acts as the Proton donor/acceptor in catalysis. 3 residues coordinate Zn(2+): His-110, His-112, and His-137. Substrate is bound at residue 219–220 (TT). Asn-255 is a glycosylation site (N-linked (GlcNAc...) asparagine).

It belongs to the alpha-carbonic anhydrase family. The cofactor is Zn(2+). In terms of tissue distribution, major constituent of saliva.

It localises to the secreted. The enzyme catalyses hydrogencarbonate + H(+) = CO2 + H2O. Its function is as follows. Reversible hydration of carbon dioxide. Its role in saliva is unknown. The polypeptide is Carbonic anhydrase 6 (Ca6) (Mus musculus (Mouse)).